The chain runs to 79 residues: Serine protease inhibitor Kazal-type 1 (79 aa).

An N-terminal signal peptide occupies residues 1–23; the sequence is MKVASIFLLTALVLMSLSGNSGA. Residues 26 to 79 form the Kazal-like domain; that stretch reads LGREAKCTNEVNGCPRIYNPVCGTDGVTYSNECLLCMENKERQTPVLIQKSGPC. 3 disulfides stabilise this stretch: Cys-32-Cys-61, Cys-39-Cys-58, and Cys-47-Cys-79.

The protein resides in the secreted. Serine protease inhibitor which exhibits anti-trypsin activity. In the pancreas, protects against trypsin-catalyzed premature activation of zymogens. Its function is as follows. In the male reproductive tract, binds to sperm heads where it modulates sperm capacitance by inhibiting calcium uptake and nitrogen oxide (NO) production. This chain is Serine protease inhibitor Kazal-type 1 (SPINK1), found in Bos taurus (Bovine).